Reading from the N-terminus, the 271-residue chain is Indole-3-glycerol phosphate synthase (271 aa).

It belongs to the TrpC family.

The catalysed reaction is 1-(2-carboxyphenylamino)-1-deoxy-D-ribulose 5-phosphate + H(+) = (1S,2R)-1-C-(indol-3-yl)glycerol 3-phosphate + CO2 + H2O. The protein operates within amino-acid biosynthesis; L-tryptophan biosynthesis; L-tryptophan from chorismate: step 4/5. The protein is Indole-3-glycerol phosphate synthase of Haloarcula marismortui (strain ATCC 43049 / DSM 3752 / JCM 8966 / VKM B-1809) (Halobacterium marismortui).